We begin with the raw amino-acid sequence, 215 residues long: MGLLAYIPTNVLATYLTLVLRSIGFTTFQANLLAIPNFVLHILLLFGLTWSTEKCNNRLGLSLLQPLYTVPLLAVLRFWKGTMFNKWGTYAIITLILDNPYIHAICVSLCSRNSQSVKTRTVSTCLYNMFVQAGLIISSNIYAKSDAPLYRKGNGVLFGLALFMFPILIGSKLIYVYINKQRDKRWNAMSEEEKDHYLSTTSDAGSRRLDFRFYH.

6 helical membrane passes run 3-23, 30-50, 59-79, 87-107, 122-142, and 156-176; these read LLAYIPTNVLATYLTLVLRSI, ANLLAIPNFVLHILLLFGLTW, LGLSLLQPLYTVPLLAVLRFW, WGTYAIITLILDNPYIHAICV, VSTCLYNMFVQAGLIISSNIY, and VLFGLALFMFPILIGSKLIYV.

The protein belongs to the major facilitator superfamily. Allantoate permease family.

It localises to the membrane. This is an uncharacterized protein from Saccharomyces cerevisiae (strain ATCC 204508 / S288c) (Baker's yeast).